The chain runs to 515 residues: MTKRALISVSDKNGIVEFAQELTKFGWEIISTGGTKVALDQAGVTTIAIDDVTGFPEMMDGRVKTLHPKIHGGLLARRDLDSHLQAANDHEIGLIDLVVVNLYPFKETILRPDVTYDLAVENIDIGGPSMLRSAAKNHASVTVVVDPADYPTVLGEIAEQGETSYATRQRLAAKVFRHTAAYDALIADYFTKQVGEDKPEKLTITYDLNQPMRYGENPQQNADFYQNALPTAYSIAAAKQLNGKELSFNNIRDADAAIRIIRDFKDRPTVVALKHMNPCGIGQAETIEQAWDYAYEADPVSIFGGIVVLNREVDAATAEKMHPIFLEIIIAPGYSAEALAILTNKKKNLRILELAFDAQDASEVEKEFTGVVGGLLVQDQDVVVESPVDWQVVTERQPSEQEWAAMEFAWKSSKYVKSNGIIITNDKMTLGVGPGQTNRVASVRIAIEQAKDRLEGAVLASDAFFPFADNVEEIAAAGIKAIIQPGGSVRDQDSIDMANKYGLTMVFTGVRHFRH.

The 145-residue stretch at 1–145 folds into the MGS-like domain; that stretch reads MTKRALISVS…KNHASVTVVV (145 aa).

Belongs to the PurH family.

It carries out the reaction (6R)-10-formyltetrahydrofolate + 5-amino-1-(5-phospho-beta-D-ribosyl)imidazole-4-carboxamide = 5-formamido-1-(5-phospho-D-ribosyl)imidazole-4-carboxamide + (6S)-5,6,7,8-tetrahydrofolate. The catalysed reaction is IMP + H2O = 5-formamido-1-(5-phospho-D-ribosyl)imidazole-4-carboxamide. The protein operates within purine metabolism; IMP biosynthesis via de novo pathway; 5-formamido-1-(5-phospho-D-ribosyl)imidazole-4-carboxamide from 5-amino-1-(5-phospho-D-ribosyl)imidazole-4-carboxamide (10-formyl THF route): step 1/1. Its pathway is purine metabolism; IMP biosynthesis via de novo pathway; IMP from 5-formamido-1-(5-phospho-D-ribosyl)imidazole-4-carboxamide: step 1/1. In Streptococcus suis, this protein is Bifunctional purine biosynthesis protein PurH.